A 55-amino-acid chain; its full sequence is Large ribosomal subunit protein bL33 (55 aa).

Residues 1–11 (MAKGGREKIKL) are compositionally biased toward basic and acidic residues. The interval 1-29 (MAKGGREKIKLESTAGTGHFYTTTKNKKT) is disordered. The span at 14–24 (TAGTGHFYTTT) shows a compositional bias: polar residues.

Belongs to the bacterial ribosomal protein bL33 family.

This chain is Large ribosomal subunit protein bL33, found in Thiobacillus denitrificans (strain ATCC 25259 / T1).